The primary structure comprises 682 residues: T-box brain protein 1 (682 aa).

Disordered regions lie at residues 43-83 and 108-127; these read TDNL…RSKL and SQSSQPQSAATAPSAMFPYP. The segment covering 58–68 has biased composition (polar residues); sequence GMTNQSDTDNF. Over residues 108-122 the composition is skewed to low complexity; sequence SQSSQPQSAATAPSA. The T-box DNA-binding region spans 213–393; the sequence is LWLKFHRHQT…HNPFAKGFRD (181 aa). Residue Thr-408 is modified to Phosphothreonine. Ser-410 bears the Phosphoserine mark. Disordered regions lie at residues 447–483 and 588–658; these read PGAGAGPGPGTDRSVPHTNGLLSPQQAEDPGAPSPQR and GLAA…KSEV. Positions 462 to 472 are enriched in polar residues; the sequence is PHTNGLLSPQQ. A Phosphoserine modification is found at Ser-594. A compositionally biased stretch (low complexity) spans 619-629; sequence SSIKSIDSSDS. At Ser-641 the chain carries Phosphoserine.

As to quaternary structure, homodimer. Part of a complex containing CASK, TBR1 and TSPYL2; may modulate gene expression in response to neuronal synaptic activity. Interacts with FOXP2. Interacts with FOXP1. Interacts with BCL11A. Brain.

It localises to the nucleus. Its function is as follows. Transcriptional repressor involved in multiple aspects of cortical development, including neuronal migration, laminar and areal identity, and axonal projection. As transcriptional repressor of FEZF2, it blocks the formation of the corticospinal (CS) tract from layer 6 projection neurons, thereby restricting the origin of CS axons specifically to layer 5 neurons. This is T-box brain protein 1 (TBR1) from Homo sapiens (Human).